Consider the following 106-residue polypeptide: Thioredoxin (106 aa).

Residues 2 to 106 (VNFLKTKADF…GLREKIKKNK (105 aa)) enclose the Thioredoxin domain. Residues Cys32 and Cys35 each act as nucleophile in the active site. Cys32 and Cys35 form a disulfide bridge.

Belongs to the thioredoxin family.

The protein resides in the cytoplasm. In terms of biological role, participates in various redox reactions through the reversible oxidation of its active center dithiol to a disulfide and catalyzes dithiol-disulfide exchange reactions. The chain is Thioredoxin (THIO) from Geodia cydonium (Sponge).